We begin with the raw amino-acid sequence, 529 residues long: Bifunctional purine biosynthesis protein PurH (529 aa).

The 148-residue stretch at 1–148 (MEQSFLPIRC…KNYKYVTVVV (148 aa)) folds into the MGS-like domain.

The protein belongs to the PurH family.

It catalyses the reaction (6R)-10-formyltetrahydrofolate + 5-amino-1-(5-phospho-beta-D-ribosyl)imidazole-4-carboxamide = 5-formamido-1-(5-phospho-D-ribosyl)imidazole-4-carboxamide + (6S)-5,6,7,8-tetrahydrofolate. The enzyme catalyses IMP + H2O = 5-formamido-1-(5-phospho-D-ribosyl)imidazole-4-carboxamide. The protein operates within purine metabolism; IMP biosynthesis via de novo pathway; 5-formamido-1-(5-phospho-D-ribosyl)imidazole-4-carboxamide from 5-amino-1-(5-phospho-D-ribosyl)imidazole-4-carboxamide (10-formyl THF route): step 1/1. It participates in purine metabolism; IMP biosynthesis via de novo pathway; IMP from 5-formamido-1-(5-phospho-D-ribosyl)imidazole-4-carboxamide: step 1/1. The polypeptide is Bifunctional purine biosynthesis protein PurH (Wigglesworthia glossinidia brevipalpis).